The sequence spans 500 residues: NAD(P)H-quinone oxidoreductase chain 4, chloroplastic (500 aa).

A run of 14 helical transmembrane segments spans residues 4-24 (FPWL…MLFL), 35-55 (YTIC…CYNF), 87-107 (IGTI…AFPV), 113-130 (LFHF…GSFS), 134-154 (LLLF…LLSM), 167-187 (FILY…GISL), 211-231 (ILFY…IPLH), 242-262 (HYST…YGLV), 272-292 (AHSL…IYAA), 305-325 (IAYS…SITD), 330-350 (GAIL…FLAG), 386-406 (LALP…GIIT), 416-436 (ILII…LLSM), and 462-482 (LFLS…PDFV).

This sequence belongs to the complex I subunit 4 family.

The protein localises to the plastid. It is found in the chloroplast thylakoid membrane. The catalysed reaction is a plastoquinone + NADH + (n+1) H(+)(in) = a plastoquinol + NAD(+) + n H(+)(out). It carries out the reaction a plastoquinone + NADPH + (n+1) H(+)(in) = a plastoquinol + NADP(+) + n H(+)(out). This chain is NAD(P)H-quinone oxidoreductase chain 4, chloroplastic, found in Draba nemorosa (Woodland whitlowgrass).